A 260-amino-acid chain; its full sequence is MMWSNFFMQEEDRRRTAVGRRRAQEQQNLGLTPEREGKIKLGLLVAIVGATLAVLAVGTEFWVELNTYKTNGSAVCEAAHLGLWKVCIKRLWQADVPAGRETCGPAELPGEANCTYFKFFTTGENARIFQRTTKKEVNLAAAVIAVLGLTAMALGCLCVIMVLSKGAESLLRLGAVCFGLSGLLLFVSLEVFRHSVGALLQGVNPETPPAPRLAYEYSWSLGCGVGAGLILLLGGVCFLLLTLPSWPWRSLCPKWGGPTA.

The next 4 membrane-spanning stretches (helical) occupy residues 43–63, 143–163, 169–189, and 221–241; these read LLVA…EFWV, VIAV…IMVL, SLLR…FVSL, and LGCG…FLLL.

The protein belongs to the PMP-22/EMP/MP20 family. CACNG subfamily. In terms of assembly, interacts with CACNA1C. Identified in a complex with the L-type calcium channel subunits CACNA1C, CACNA2D1 and either CACNB1 or CACNB2. Detected in brain and heart (at protein level).

Its subcellular location is the cell membrane. In terms of biological role, regulates the activity of L-type calcium channels that contain CACNA1C as pore-forming subunit. The polypeptide is Voltage-dependent calcium channel gamma-6 subunit (Cacng6) (Mus musculus (Mouse)).